The following is a 507-amino-acid chain: Maturase K (507 aa).

This sequence belongs to the intron maturase 2 family. MatK subfamily.

The protein resides in the plastid. It localises to the chloroplast. Usually encoded in the trnK tRNA gene intron. Probably assists in splicing its own and other chloroplast group II introns. The polypeptide is Maturase K (Fagopyrum tataricum (Tartarian buckwheat)).